The primary structure comprises 456 residues: 5-hydroxytryptamine receptor 3E (456 aa).

Residues 1–25 (MEGSWFHRKRFSFYLLLGFLLQGRG) form the signal peptide. Residues 26–248 (VTFTINCSGF…FYVAIRRRPS (223 aa)) are Extracellular-facing. Cys-162 and Cys-176 are oxidised to a cystine. The N-linked (GlcNAc...) asparagine glycan is linked to Asn-175. Residues 249 to 269 (LYVINLLVPSGFLVAIDALSF) traverse the membrane as a helical segment. The Cytoplasmic portion of the chain corresponds to 270-282 (YLPVKSGNRVPFK). A helical transmembrane segment spans residues 283–303 (ITLLLGYNVFLLMMSDLLPTS). The Extracellular segment spans residues 304 to 307 (GTPL). The helical transmembrane segment at 308-328 (IGVYFALCLSLMVGSLLETIF) threads the bilayer. Residues 329-433 (ITHLLHVATT…WLQFSHAMDA (105 aa)) lie on the Cytoplasmic side of the membrane. The interval 401–432 (TGGSEWTRAQREHEAQKQHSVELWLQFSHAMD) is HA-stretch; determines single-channel conductance in 5-HT3 receptors. A helical membrane pass occupies residues 434-454 (MLFRLYLLFMASSIITVICLW). Residues 455-456 (NT) lie on the Extracellular side of the membrane.

Belongs to the ligand-gated ion channel (TC 1.A.9) family. 5-hydroxytryptamine receptor (TC 1.A.9.2) subfamily. HTR3E sub-subfamily. In terms of assembly, forms homopentameric as well as heteropentameric serotonin-activated cation-selective channel complexes with HTR3A. The homomeric complex is not functional. Heteropentameric complexes display properties which resemble that of neuronal serotonin-activated channels in vivo. In terms of tissue distribution, expressed in adult colon and intestine.

The protein resides in the postsynaptic cell membrane. The protein localises to the cell membrane. The catalysed reaction is Na(+)(in) = Na(+)(out). It catalyses the reaction K(+)(in) = K(+)(out). The enzyme catalyses Ca(2+)(in) = Ca(2+)(out). Functionally, forms serotonin (5-hydroxytryptamine/5-HT3)-activated cation-selective channel complexes, which when activated cause fast, depolarizing responses in neurons. This is 5-hydroxytryptamine receptor 3E from Homo sapiens (Human).